We begin with the raw amino-acid sequence, 301 residues long: Small ribosomal subunit protein uS2 (301 aa).

It belongs to the universal ribosomal protein uS2 family. In terms of assembly, component of the small ribosomal subunit. Mature ribosomes consist of a small (40S) and a large (60S) subunit. The 40S subunit contains about 33 different proteins and 1 molecule of RNA (18S). The 60S subunit contains about 49 different proteins and 3 molecules of RNA (28S, 5.8S and 5S). Interacts with ribosomal protein S21.

The protein localises to the cytoplasm. Functionally, required for the assembly and/or stability of the 40S ribosomal subunit. Required for the processing of the 20S rRNA-precursor to mature 18S rRNA in a late step of the maturation of 40S ribosomal subunits. This is Small ribosomal subunit protein uS2 from Brugia malayi (Filarial nematode worm).